The following is a 713-amino-acid chain: Constitutive lysine decarboxylase (713 aa).

Lys367 is modified (N6-(pyridoxal phosphate)lysine).

Belongs to the Orn/Lys/Arg decarboxylase class-I family. Homodecamer; built of five dimers associated in a 5-fold symmetrical double-ring. Pyridoxal 5'-phosphate serves as cofactor.

It catalyses the reaction L-lysine + H(+) = cadaverine + CO2. In terms of biological role, plays a role in lysine utilization by acting as a lysine decarboxylase. This chain is Constitutive lysine decarboxylase (ldcC), found in Escherichia coli (strain K12).